Here is a 135-residue protein sequence, read N- to C-terminus: Cytochrome c oxidase subunit 2 (135 aa).

4 residues coordinate Cu cation: histidine 81, cysteine 116, cysteine 120, and histidine 124.

Belongs to the cytochrome c oxidase subunit 2 family.

Its subcellular location is the cell membrane. The catalysed reaction is 4 Fe(II)-[cytochrome c] + O2 + 8 H(+)(in) = 4 Fe(III)-[cytochrome c] + 2 H2O + 4 H(+)(out). In terms of biological role, subunits I and II form the functional core of the enzyme complex. Electrons originating in cytochrome c are transferred via heme a and Cu(A) to the binuclear center formed by heme a3 and Cu(B). This chain is Cytochrome c oxidase subunit 2 (cbaB), found in Thermus thermophilus.